We begin with the raw amino-acid sequence, 127 residues long: Mitochondrial pyruvate carrier 2 (127 aa).

At 2–40 (AAAGARGLRATYHRLMDKVELLLPKKLRPLYNHPAGPRT) the chain is on the mitochondrial matrix side. At lysine 26 the chain carries N6-acetyllysine. Residues 41 to 61 (VFFWAPIMKWGLVCAGLADMA) form a helical membrane-spanning segment. The Mitochondrial intermembrane portion of the chain corresponds to 62–72 (RPAEKLSTAQS). The helical transmembrane segment at 73–90 (TVLMATGFIWSRYSLVII) threads the bilayer. Residues 91–95 (PKNWS) are Mitochondrial matrix-facing. Residues 96–115 (LFAVNFFVGSAGASQLFRIW) traverse the membrane as a helical segment. The Mitochondrial intermembrane portion of the chain corresponds to 116–127 (KYNQELKSKGIQ).

Belongs to the mitochondrial pyruvate carrier (MPC) (TC 2.A.105) family. As to quaternary structure, homodimer. Homooligomer. Forms heterodimers with MPC1 and MPC1L. The heterodimer is the more stable and dominant form. Liver, kidney, and brain.

Its subcellular location is the mitochondrion inner membrane. The catalysed reaction is pyruvate(out) + H(+)(out) = pyruvate(in) + H(+)(in). Its function is as follows. Mediates the uptake of pyruvate into mitochondria. This is Mitochondrial pyruvate carrier 2 (Mpc2) from Rattus norvegicus (Rat).